Consider the following 227-residue polypeptide: Cytidylate kinase (227 aa).

Residue 12-20 (GPSGAGKGT) coordinates ATP.

The protein belongs to the cytidylate kinase family. Type 1 subfamily.

It is found in the cytoplasm. The catalysed reaction is CMP + ATP = CDP + ADP. It carries out the reaction dCMP + ATP = dCDP + ADP. The sequence is that of Cytidylate kinase from Shigella flexneri.